The following is a 114-amino-acid chain: Gas vesicle protein J (114 aa).

Residues 63-114 (PTGTDMERVEEAAGISPDESRSLDTRSESEQMDELPGEAGASVSNTAPQEEE) form a disordered region. Basic and acidic residues predominate over residues 80 to 91 (DESRSLDTRSES). Polar residues predominate over residues 104–114 (SVSNTAPQEEE).

Belongs to the gas vesicle GvpA family. In terms of assembly, gvpF to GvpM interact with each other in vitro, and may form multi-subunit complex(es). Interacts with GvpA.

Its subcellular location is the gas vesicle. In terms of biological role, a minor component of the gas vesicle, proteins GvpF to GvpM might be involved in nucleating gas vesicle formation. Gas vesicles are hollow, gas filled proteinaceous nanostructures found in some microorganisms. They allow positioning of halobacteria at the optimal depth for growth in the poorly aerated, shallow brine pools of their habitat. Functionally, expression of a 9.5 kb mc-vac DNA fragment containing 2 divergently transcribed regions (gvpD-gvpE-gvpF-gvpG-gvpH-gvpI-gvpJ-gvpK-gvpL-gvpM and gvpA-gvpC-gvpN-gvpO) allows H.volcanii to produce gas vesicles. The chain is Gas vesicle protein J from Haloferax mediterranei (strain ATCC 33500 / DSM 1411 / JCM 8866 / NBRC 14739 / NCIMB 2177 / R-4) (Halobacterium mediterranei).